The primary structure comprises 252 residues: N-glycosylase/DNA lyase (252 aa).

Gln32, Ser60, and Trp71 together coordinate 8-oxoguanine. Positions 129–193 (KTYYSDMEKL…KDSRIEKYTL (65 aa)) are helix-hairpin-helix. Lys153 functions as the Schiff-base intermediate with DNA in the catalytic mechanism. 2 residues coordinate 8-oxoguanine: Phe157 and Pro183. The active site involves Asp185. 8-oxoguanine-binding residues include Asp219 and Trp223.

This sequence belongs to the archaeal N-glycosylase/DNA lyase (AGOG) family.

The enzyme catalyses 2'-deoxyribonucleotide-(2'-deoxyribose 5'-phosphate)-2'-deoxyribonucleotide-DNA = a 3'-end 2'-deoxyribonucleotide-(2,3-dehydro-2,3-deoxyribose 5'-phosphate)-DNA + a 5'-end 5'-phospho-2'-deoxyribonucleoside-DNA + H(+). Functionally, DNA repair enzyme that is part of the base excision repair (BER) pathway; protects from oxidative damage by removing the major product of DNA oxidation, 8-oxoguanine (GO), from single- and double-stranded DNA substrates. The protein is N-glycosylase/DNA lyase of Methanococcus maripaludis (strain DSM 14266 / JCM 13030 / NBRC 101832 / S2 / LL).